The chain runs to 478 residues: MKVYETVIGLEVHVELATKSKIFCGCTTQFGGEVNAHCCPICMGMPGTLPVLNKKVVEFAIAAGLAMNCDITKNCKFDRKNYFYPDLPKAYQVSQLYLPICRNGSIEIEVDGIKKSIGIHEIHMEEDAGKLVHDPWEDCTLVDYNRCGVPLIEIVSEPDMRSAEEVIAYLEKLKLILQYLGVSDCKMQEGSLRADINLSIREVGEPEFGTRTEMKNMNSFKAIARAIEGERKRQIELLEDGKKVIQETRRWDDNKDTSFAMRSKEDAQDYRYFPEPDLVPMEISEEWLTEIKGREPELRDAKMLRYVKEYEIPEYDAGIITGSKNLADIFEATVSLCNKPKEVSNWLMVETMRLLKESEQDAEELKLSPANFASLIELIDAGKINRTIAKEVFEQIFKANVDPNAYIEEHGLGMVSDDGVVRSTIENILKENVQSVSDYKNGKDKAFGFLVGQTMKAMRGKANPSVINEILRELLSKA.

The protein belongs to the GatB/GatE family. GatB subfamily. As to quaternary structure, heterotrimer of A, B and C subunits.

The catalysed reaction is L-glutamyl-tRNA(Gln) + L-glutamine + ATP + H2O = L-glutaminyl-tRNA(Gln) + L-glutamate + ADP + phosphate + H(+). The enzyme catalyses L-aspartyl-tRNA(Asn) + L-glutamine + ATP + H2O = L-asparaginyl-tRNA(Asn) + L-glutamate + ADP + phosphate + 2 H(+). Functionally, allows the formation of correctly charged Asn-tRNA(Asn) or Gln-tRNA(Gln) through the transamidation of misacylated Asp-tRNA(Asn) or Glu-tRNA(Gln) in organisms which lack either or both of asparaginyl-tRNA or glutaminyl-tRNA synthetases. The reaction takes place in the presence of glutamine and ATP through an activated phospho-Asp-tRNA(Asn) or phospho-Glu-tRNA(Gln). The sequence is that of Aspartyl/glutamyl-tRNA(Asn/Gln) amidotransferase subunit B from Lachnoclostridium phytofermentans (strain ATCC 700394 / DSM 18823 / ISDg) (Clostridium phytofermentans).